The primary structure comprises 778 residues: pH-response regulator protein palH/prr-4 (778 aa).

Residues 1–108 lie on the Extracellular side of the membrane; that stretch reads MEPRQLFSDP…DPFYASTFPQ (108 aa). Residues 109-129 traverse the membrane as a helical segment; that stretch reads CYALAATTIIAYTLVIMLFIT. Over 130–160 the chain is Periplasmic; the sequence is PRSFLDGGVVVLGRKGFTNGGGGTSIGGRPW. The helical transmembrane segment at 161 to 181 threads the bilayer; that stretch reads LQKVAALSVAISLTIANAATF. Residues 182–201 are Extracellular-facing; the sequence is RAAEQQYSWGVQNAKQLQED. Residues 202 to 222 form a helical membrane-spanning segment; the sequence is VLGGAELKIIRIISDTFLWLA. The Periplasmic segment spans residues 223–237; it reads QAQTLIRLFPRQREK. A helical membrane pass occupies residues 238–258; it reads VIIKWTAFALITLDVIFQSLN. Residues 259–275 lie on the Extracellular side of the membrane; sequence SFKYGGSDLTRPKFTEA. Residues 276–296 traverse the membrane as a helical segment; the sequence is VPALSYLFALALGVLYAAWVL. Residues 297–314 are Periplasmic-facing; it reads YYSIMKKRYAFYHPLMKN. A helical membrane pass occupies residues 315 to 335; that stretch reads MILVAVLSVVSILVPVVFFIL. The Extracellular portion of the chain corresponds to 336–341; it reads DISKPD. Residues 342–362 traverse the membrane as a helical segment; that stretch reads FAGWGDYVRWVGAAAASVIVW. The Periplasmic portion of the chain corresponds to 363–778; sequence EWVERIEALE…RSDSSTTPSP (416 aa). Disordered stretches follow at residues 394 to 499, 514 to 605, and 660 to 778; these read ASQS…DTTS, ELTS…DENS, and ELNH…TPSP. A compositionally biased stretch (basic and acidic residues) spans 446 to 456; it reads HRTEPSSRNEP. The segment covering 457–466 has biased composition (polar residues); the sequence is NEGSSPVAET. Basic and acidic residues-rich tracts occupy residues 588–605 and 661–675; these read FVTR…DENS and LNHS…EESR. The segment covering 720–732 has biased composition (polar residues); the sequence is PIVTQGSFTNNRY. A compositionally biased stretch (low complexity) spans 749–759; sequence ARAPSQPQSPS. Positions 769–778 are enriched in polar residues; it reads RSDSSTTPSP.

This sequence belongs to the palH/RIM21 family.

The protein localises to the cell membrane. Functionally, required for the proteolytic cleavage of the transcription factor pacc-1 in response to alkaline ambient pH. The protein is pH-response regulator protein palH/prr-4 (prr-4) of Neurospora crassa (strain ATCC 24698 / 74-OR23-1A / CBS 708.71 / DSM 1257 / FGSC 987).